A 336-amino-acid chain; its full sequence is tRNA-dihydrouridine(20/20a) synthase (336 aa).

FMN-binding positions include 24–26 and Gln77; that span reads PMM. Residue Cys107 is the Proton donor of the active site. FMN-binding positions include Lys146, His178, 218–220, and 240–241; these read NGG and GR.

This sequence belongs to the Dus family. DusA subfamily. FMN serves as cofactor.

The catalysed reaction is 5,6-dihydrouridine(20) in tRNA + NADP(+) = uridine(20) in tRNA + NADPH + H(+). The enzyme catalyses 5,6-dihydrouridine(20) in tRNA + NAD(+) = uridine(20) in tRNA + NADH + H(+). It carries out the reaction 5,6-dihydrouridine(20a) in tRNA + NADP(+) = uridine(20a) in tRNA + NADPH + H(+). It catalyses the reaction 5,6-dihydrouridine(20a) in tRNA + NAD(+) = uridine(20a) in tRNA + NADH + H(+). Functionally, catalyzes the synthesis of 5,6-dihydrouridine (D), a modified base found in the D-loop of most tRNAs, via the reduction of the C5-C6 double bond in target uridines. Specifically modifies U20 and U20a in tRNAs. The protein is tRNA-dihydrouridine(20/20a) synthase of Pseudomonas syringae pv. tomato (strain ATCC BAA-871 / DC3000).